A 323-amino-acid chain; its full sequence is Low affinity immunoglobulin gamma Fc region receptor II-c (323 aa).

A signal peptide spans 1–42; sequence MGILSFLPVLATESDWADCKSPQPWGHMLLWTAVLFLAPVAG. The Extracellular portion of the chain corresponds to 43–223; that stretch reads TPAAPPKAVL…VQAPSSSPMG (181 aa). Ig-like C2-type domains are found at residues 48–127 and 131–213; these read PKAV…VHLT and EWLV…VTIT. Cystine bridges form between Cys-71/Cys-113 and Cys-152/Cys-196. N-linked (GlcNAc...) asparagine glycans are attached at residues Asn-106, Asn-180, and Asn-187. The helical transmembrane segment at 224 to 246 threads the bilayer; the sequence is IIVAVVTGIAVAAIVAAVVALIY. The Cytoplasmic portion of the chain corresponds to 247-323; it reads CRKKRISANS…PPNDHVNSNN (77 aa). Positions 277–323 are disordered; that stretch reads KRQPEETNNDYETADGGYMTLNPRAPTDDDKNIYLTLPPNDHVNSNN. Tyr-294 and Tyr-310 each carry phosphotyrosine; by SRC-type Tyr-kinases.

Post-translationally, phosphorylated by SRC-type Tyr-kinases such as LYN, BLK, FYN and SYK. Isoform IIC1 is detected in monocytes, macrophages, polymorphonuclear cells and natural killer cells.

The protein resides in the cytoplasm. It is found in the cell membrane. Functionally, receptor for the Fc region of complexed immunoglobulins gamma. Low affinity receptor. Involved in a variety of effector and regulatory functions such as phagocytosis of immune complexes and modulation of antibody production by B-cells. This is Low affinity immunoglobulin gamma Fc region receptor II-c (FCGR2C) from Homo sapiens (Human).